We begin with the raw amino-acid sequence, 215 residues long: uncharacterized protein (215 aa).

The next 5 helical transmembrane spans lie at 1 to 21 (MTAE…AIGM), 36 to 56 (VLIG…FADV), 67 to 87 (SRIA…NILV), 92 to 112 (IVGL…MVIG), and 118 to 138 (LGIY…QLTF).

Belongs to the MgtC/SapB family.

The protein resides in the cell inner membrane. This is an uncharacterized protein from Escherichia coli O157:H7.